A 229-amino-acid polypeptide reads, in one-letter code: Movement and silencing protein TGBp1 (229 aa).

One can recognise a (+)RNA virus helicase ATP-binding domain in the interval 1 to 114 (MVEFTKRLLL…PAAQVPHFVK (114 aa)). The (+)RNA virus helicase C-terminal domain maps to 115–229 (LFSHRCGLNS…MSFDAADTSA (115 aa)).

The protein belongs to the Tymovirales TGBp1 protein family. As to quaternary structure, homodimer and homooligomer. Interacts with capsid protein. Interacts with host AGO1; this interaction targets the host protein for degradation, thereby suppressing the antiviral RNA silencing.

The protein resides in the host cytoplasm. Its function is as follows. Transports viral genome to neighboring plant cells directly through plasmosdesmata, without any budding. The movement protein allows efficient cell to cell propagation, by bypassing the host cell wall barrier. Increases plasmodesma size exclusion limit. Acts as a suppressor of RNA-mediated gene silencing, also known as post-transcriptional gene silencing (PTGS), a mechanism of plant viral defense that limits the accumulation of viral RNAs. This Strawberry mild yellow edge-associated virus (SMYEaV) protein is Movement and silencing protein TGBp1.